Consider the following 908-residue polypeptide: 26S proteasome non-ATPase regulatory subunit 2 (908 aa).

Methionine 1 is modified (N-acetylmethionine). A disordered region spans residues 1–52; the sequence is MEEGGRDKAPVQPQQSPAAALGGTDEKPSGKERRDAGDKDKEQELSEEDKQL. Residues 10-20 show a composition bias toward low complexity; the sequence is PVQPQQSPAAA. Residue serine 16 is modified to Phosphoserine. Threonine 24 bears the Phosphothreonine mark. The span at 24 to 52 shows a compositional bias: basic and acidic residues; sequence TDEKPSGKERRDAGDKDKEQELSEEDKQL. Serine 29 and serine 147 each carry phosphoserine. Tyrosine 194 bears the Phosphotyrosine mark. A phosphoserine mark is found at serine 361 and serine 363. 5 PC repeats span residues 409 to 442, 443 to 479, 480 to 514, 517 to 551, and 560 to 589; these read SAAA…YIKS, GALL…TMRL, GSIF…SMEV, VTAL…TELK, and LGLG…PFRS. Lysine 551 carries the N6-acetyllysine modification. Over residues 623-643 the composition is skewed to basic and acidic residues; that stretch reads KEKEEDKDKKEKKDKDKKEAP. The tract at residues 623–645 is disordered; sequence KEKEEDKDKKEKKDKDKKEAPAD. PC repeat units follow at residues 692 to 723 and 742 to 757; these read LALA…EVSY and AAML…KDPN. Residues 708-903 are required for interaction with UBLCP1; that stretch reads DTLSKFSHDA…LEGFVILRKN (196 aa).

Belongs to the proteasome subunit S2 family. As to quaternary structure, component of the 19S proteasome regulatory particle complex. The 26S proteasome consists of a 20S core particle (CP) and two 19S regulatory subunits (RP). The regulatory particle is made of a lid composed of 9 subunits, a base containing 6 ATPases and few additional components including PSMD2. Interacts with RPGRIP1L. Interacts with CRY1 in a KDM8-dependent manner. Interacts (via C-terminus) with phosphatase UBLCP1 (via ubiquitin-like domain); the interaction recruits UBLCP1 to the 19S regulatory particle where it dephosphorylates 19S subunit PSMC2/RPT1 which impairs PSMC2 ATPase activity and disrupts 26S proteasome assembly.

Component of the 26S proteasome, a multiprotein complex involved in the ATP-dependent degradation of ubiquitinated proteins. This complex plays a key role in the maintenance of protein homeostasis by removing misfolded or damaged proteins, which could impair cellular functions, and by removing proteins whose functions are no longer required. Therefore, the proteasome participates in numerous cellular processes, including cell cycle progression, apoptosis, or DNA damage repair. Functionally, binds to the intracellular domain of tumor necrosis factor type 1 receptor. The binding domain of TRAP1 and TRAP2 resides outside the death domain of TNFR1. The protein is 26S proteasome non-ATPase regulatory subunit 2 (PSMD2) of Pongo abelii (Sumatran orangutan).